A 172-amino-acid chain; its full sequence is MORN repeat-containing protein 5 (172 aa).

MORN repeat units lie at residues 8–30 (YIGE…TETK), 31–53 (YIGE…NGSR), and 54–75 (FDAV…DGLQ).

It is found in the cell projection. Its subcellular location is the cilium. The protein resides in the flagellum. The chain is MORN repeat-containing protein 5 (MORN5) from Bos taurus (Bovine).